We begin with the raw amino-acid sequence, 544 residues long: CTP synthase (544 aa).

The segment at 1-266 is amidoligase domain; sequence MTKFIFVTGG…DDLICERFGL (266 aa). Serine 13 serves as a coordination point for CTP. Residue serine 13 participates in UTP binding. Residues 14 to 19 and aspartate 71 contribute to the ATP site; that span reads SLGKGI. Positions 71 and 140 each coordinate Mg(2+). CTP contacts are provided by residues 147–149, 187–192, and lysine 223; these read DIE and KTKPTQ. UTP contacts are provided by residues 187 to 192 and lysine 223; that span reads KTKPTQ. One can recognise a Glutamine amidotransferase type-1 domain in the interval 291 to 543; the sequence is TVAMVGKYVE…VKAAKNYSEA (253 aa). Glycine 354 lines the L-glutamine pocket. Cysteine 381 functions as the Nucleophile; for glutamine hydrolysis in the catalytic mechanism. L-glutamine contacts are provided by residues 382–385, glutamate 404, and arginine 471; that span reads LGMQ. Catalysis depends on residues histidine 516 and glutamate 518.

It belongs to the CTP synthase family. As to quaternary structure, homotetramer.

It catalyses the reaction UTP + L-glutamine + ATP + H2O = CTP + L-glutamate + ADP + phosphate + 2 H(+). The catalysed reaction is L-glutamine + H2O = L-glutamate + NH4(+). It carries out the reaction UTP + NH4(+) + ATP = CTP + ADP + phosphate + 2 H(+). The protein operates within pyrimidine metabolism; CTP biosynthesis via de novo pathway; CTP from UDP: step 2/2. Allosterically activated by GTP, when glutamine is the substrate; GTP has no effect on the reaction when ammonia is the substrate. The allosteric effector GTP functions by stabilizing the protein conformation that binds the tetrahedral intermediate(s) formed during glutamine hydrolysis. Inhibited by the product CTP, via allosteric rather than competitive inhibition. Catalyzes the ATP-dependent amination of UTP to CTP with either L-glutamine or ammonia as the source of nitrogen. Regulates intracellular CTP levels through interactions with the four ribonucleotide triphosphates. This Psychrobacter cryohalolentis (strain ATCC BAA-1226 / DSM 17306 / VKM B-2378 / K5) protein is CTP synthase.